We begin with the raw amino-acid sequence, 209 residues long: Thymidylate kinase (209 aa).

7–14 serves as a coordination point for ATP; sequence GVEGSGKS.

It belongs to the thymidylate kinase family.

The catalysed reaction is dTMP + ATP = dTDP + ADP. In terms of biological role, phosphorylation of dTMP to form dTDP in both de novo and salvage pathways of dTTP synthesis. This is Thymidylate kinase from Solidesulfovibrio magneticus (strain ATCC 700980 / DSM 13731 / RS-1) (Desulfovibrio magneticus).